Here is a 448-residue protein sequence, read N- to C-terminus: Asparagine--tRNA ligase (448 aa).

Belongs to the class-II aminoacyl-tRNA synthetase family. As to quaternary structure, homodimer.

It is found in the cytoplasm. The enzyme catalyses tRNA(Asn) + L-asparagine + ATP = L-asparaginyl-tRNA(Asn) + AMP + diphosphate + H(+). The polypeptide is Asparagine--tRNA ligase (Streptococcus thermophilus (strain ATCC BAA-250 / LMG 18311)).